A 4114-amino-acid polypeptide reads, in one-letter code: Ferrichrome siderophore peptide synthetase (4114 aa).

4 Carrier domains span residues 797 to 874 (DPAT…QSSG), 1947 to 2021 (TDSE…IDKL), 3020 to 3093 (TQSE…MQSS), and 3574 to 3650 (QALS…SQTN). O-(pantetheine 4'-phosphoryl)serine is present on residues Ser835, Ser1982, Ser3054, and Ser3611. The tract at residues 4040 to 4061 (LDYSHHSQHSTHDRTPPSTPHV) is disordered. Positions 4041–4054 (DYSHHSQHSTHDRT) are enriched in basic and acidic residues.

It belongs to the ATP-dependent AMP-binding enzyme family. Requires pantetheine 4'-phosphate as cofactor.

It participates in siderophore biosynthesis; ferrichrome biosynthesis. Functionally, multidomain peptide synthetase involved in ferrichrome biosynthesis. This is Ferrichrome siderophore peptide synthetase (SID2) from Mycosarcoma maydis (Corn smut fungus).